A 190-amino-acid polypeptide reads, in one-letter code: dCTP deaminase, dUMP-forming (190 aa).

Residues 101-106, Asp-119, 127-129, Gln-148, Tyr-162, and Gln-174 each bind dCTP; these read KSSLGR and TLE. Glu-129 acts as the Proton donor/acceptor in catalysis. A disordered region spans residues 163 to 190; that stretch reads GSSQVGSKYQGQRGPTPSKSYQNFVKSN.

The protein belongs to the dCTP deaminase family. In terms of assembly, homotrimer.

The catalysed reaction is dCTP + 2 H2O = dUMP + NH4(+) + diphosphate. It functions in the pathway pyrimidine metabolism; dUMP biosynthesis; dUMP from dCTP: step 1/1. Its function is as follows. Bifunctional enzyme that catalyzes both the deamination of dCTP to dUTP and the hydrolysis of dUTP to dUMP without releasing the toxic dUTP intermediate. This chain is dCTP deaminase, dUMP-forming, found in Mycolicibacterium gilvum (strain PYR-GCK) (Mycobacterium gilvum (strain PYR-GCK)).